Here is a 702-residue protein sequence, read N- to C-terminus: Elongation factor G (702 aa).

The 279-residue stretch at 8 to 286 (DKVRNIGIIA…AVVEYLPSPL (279 aa)) folds into the tr-type G domain. GTP-binding positions include 17–24 (AHIDAGKT), 85–89 (DTPGH), and 139–142 (NKMD).

The protein belongs to the TRAFAC class translation factor GTPase superfamily. Classic translation factor GTPase family. EF-G/EF-2 subfamily.

It is found in the cytoplasm. Its function is as follows. Catalyzes the GTP-dependent ribosomal translocation step during translation elongation. During this step, the ribosome changes from the pre-translocational (PRE) to the post-translocational (POST) state as the newly formed A-site-bound peptidyl-tRNA and P-site-bound deacylated tRNA move to the P and E sites, respectively. Catalyzes the coordinated movement of the two tRNA molecules, the mRNA and conformational changes in the ribosome. The polypeptide is Elongation factor G (Chloroflexus aurantiacus (strain ATCC 29366 / DSM 635 / J-10-fl)).